Here is a 178-residue protein sequence, read N- to C-terminus: MSNSAVAKRYAQALFELAQQKNILAEVGADLNELTKIVQESPDFLTLLNAPKFSIERKKQMVAEIFAGATPEVLHTVQLLVEKKRVNEVKLIANAYAELAAKAQGTADATVFSTRALSAEESANISTTFAKLVGKQSLNITNEIDPSLLGGIRVQIGNHIYDSSVANKLERLKRELIG.

It belongs to the ATPase delta chain family. F-type ATPases have 2 components, F(1) - the catalytic core - and F(0) - the membrane proton channel. F(1) has five subunits: alpha(3), beta(3), gamma(1), delta(1), epsilon(1). F(0) has three main subunits: a(1), b(2) and c(10-14). The alpha and beta chains form an alternating ring which encloses part of the gamma chain. F(1) is attached to F(0) by a central stalk formed by the gamma and epsilon chains, while a peripheral stalk is formed by the delta and b chains.

The protein resides in the cell membrane. F(1)F(0) ATP synthase produces ATP from ADP in the presence of a proton or sodium gradient. F-type ATPases consist of two structural domains, F(1) containing the extramembraneous catalytic core and F(0) containing the membrane proton channel, linked together by a central stalk and a peripheral stalk. During catalysis, ATP synthesis in the catalytic domain of F(1) is coupled via a rotary mechanism of the central stalk subunits to proton translocation. Functionally, this protein is part of the stalk that links CF(0) to CF(1). It either transmits conformational changes from CF(0) to CF(1) or is implicated in proton conduction. This Lysinibacillus sphaericus (strain C3-41) protein is ATP synthase subunit delta.